The following is a 285-amino-acid chain: 2-dehydro-3-deoxyphosphooctonate aldolase (285 aa).

Belongs to the KdsA family.

Its subcellular location is the cytoplasm. The enzyme catalyses D-arabinose 5-phosphate + phosphoenolpyruvate + H2O = 3-deoxy-alpha-D-manno-2-octulosonate-8-phosphate + phosphate. The protein operates within carbohydrate biosynthesis; 3-deoxy-D-manno-octulosonate biosynthesis; 3-deoxy-D-manno-octulosonate from D-ribulose 5-phosphate: step 2/3. It functions in the pathway bacterial outer membrane biogenesis; lipopolysaccharide biosynthesis. This is 2-dehydro-3-deoxyphosphooctonate aldolase from Albidiferax ferrireducens (strain ATCC BAA-621 / DSM 15236 / T118) (Rhodoferax ferrireducens).